The chain runs to 66 residues: DNA-directed RNA polymerase subunit Rpo10 (66 aa).

Cysteine 7, cysteine 10, cysteine 44, and cysteine 45 together coordinate Zn(2+).

Belongs to the archaeal Rpo10/eukaryotic RPB10 RNA polymerase subunit family. In terms of assembly, part of the RNA polymerase complex. Requires Zn(2+) as cofactor.

It localises to the cytoplasm. It carries out the reaction RNA(n) + a ribonucleoside 5'-triphosphate = RNA(n+1) + diphosphate. In terms of biological role, DNA-dependent RNA polymerase (RNAP) catalyzes the transcription of DNA into RNA using the four ribonucleoside triphosphates as substrates. The protein is DNA-directed RNA polymerase subunit Rpo10 of Pyrobaculum aerophilum (strain ATCC 51768 / DSM 7523 / JCM 9630 / CIP 104966 / NBRC 100827 / IM2).